The following is a 954-amino-acid chain: Glycine dehydrogenase (decarboxylating) (954 aa).

Lys-704 is subject to N6-(pyridoxal phosphate)lysine.

The protein belongs to the GcvP family. In terms of assembly, the glycine cleavage system is composed of four proteins: P, T, L and H. The cofactor is pyridoxal 5'-phosphate.

It carries out the reaction N(6)-[(R)-lipoyl]-L-lysyl-[glycine-cleavage complex H protein] + glycine + H(+) = N(6)-[(R)-S(8)-aminomethyldihydrolipoyl]-L-lysyl-[glycine-cleavage complex H protein] + CO2. Functionally, the glycine cleavage system catalyzes the degradation of glycine. The P protein binds the alpha-amino group of glycine through its pyridoxal phosphate cofactor; CO(2) is released and the remaining methylamine moiety is then transferred to the lipoamide cofactor of the H protein. The polypeptide is Glycine dehydrogenase (decarboxylating) (Rhizobium etli (strain CIAT 652)).